A 256-amino-acid polypeptide reads, in one-letter code: Ribosomal RNA small subunit methyltransferase A (256 aa).

S-adenosyl-L-methionine contacts are provided by His12, Leu14, Gly39, Glu60, Asp83, and Asn101.

The protein belongs to the class I-like SAM-binding methyltransferase superfamily. rRNA adenine N(6)-methyltransferase family. RsmA subfamily.

The protein localises to the cytoplasm. It catalyses the reaction adenosine(1518)/adenosine(1519) in 16S rRNA + 4 S-adenosyl-L-methionine = N(6)-dimethyladenosine(1518)/N(6)-dimethyladenosine(1519) in 16S rRNA + 4 S-adenosyl-L-homocysteine + 4 H(+). Specifically dimethylates two adjacent adenosines (A1518 and A1519) in the loop of a conserved hairpin near the 3'-end of 16S rRNA in the 30S particle. May play a critical role in biogenesis of 30S subunits. This Nitrosomonas eutropha (strain DSM 101675 / C91 / Nm57) protein is Ribosomal RNA small subunit methyltransferase A.